Reading from the N-terminus, the 553-residue chain is Hydroxylamine reductase (553 aa).

[2Fe-2S] cluster is bound by residues Cys-3, Cys-6, Cys-18, and Cys-25. Hybrid [4Fe-2O-2S] cluster contacts are provided by His-252, Glu-276, Cys-320, Cys-408, Cys-436, Cys-461, Glu-495, and Lys-497. Cys-408 carries the post-translational modification Cysteine persulfide.

The protein belongs to the HCP family. The cofactor is [2Fe-2S] cluster. Hybrid [4Fe-2O-2S] cluster is required as a cofactor.

The protein localises to the cytoplasm. It catalyses the reaction A + NH4(+) + H2O = hydroxylamine + AH2 + H(+). Functionally, catalyzes the reduction of hydroxylamine to form NH(3) and H(2)O. This is Hydroxylamine reductase from Vibrio parahaemolyticus serotype O3:K6 (strain RIMD 2210633).